A 430-amino-acid chain; its full sequence is Trigger factor (430 aa).

One can recognise a PPIase FKBP-type domain in the interval 164–249; that stretch reads DDWAVIDHEG…LKALKTRQLP (86 aa).

Belongs to the FKBP-type PPIase family. Tig subfamily.

The protein resides in the cytoplasm. It catalyses the reaction [protein]-peptidylproline (omega=180) = [protein]-peptidylproline (omega=0). In terms of biological role, involved in protein export. Acts as a chaperone by maintaining the newly synthesized protein in an open conformation. Functions as a peptidyl-prolyl cis-trans isomerase. In Anaeromyxobacter sp. (strain Fw109-5), this protein is Trigger factor.